Consider the following 446-residue polypeptide: Putative RNA-ligase (446 aa).

Belongs to the asfivirus M448R family.

It is found in the virion. The chain is Putative RNA-ligase from African swine fever virus (isolate Tick/Malawi/Lil 20-1/1983) (ASFV).